The sequence spans 196 residues: UPF0200 protein MK0400 (196 aa).

Residue 7 to 14 (GMPGAGKG) coordinates ATP.

The protein belongs to the UPF0200 family.

This Methanopyrus kandleri (strain AV19 / DSM 6324 / JCM 9639 / NBRC 100938) protein is UPF0200 protein MK0400.